Here is a 166-residue protein sequence, read N- to C-terminus: Monodehydroascorbate reductase, fruit isozyme (166 aa).

The protein belongs to the FAD-dependent oxidoreductase family. FAD serves as cofactor. The N-terminus is blocked.

It catalyses the reaction 2 monodehydro-L-ascorbate radical + NADH + H(+) = 2 L-ascorbate + NAD(+). Catalyzes the conversion of monodehydroascorbate to ascorbate, oxidizing NADH in the process. In Cucumis sativus (Cucumber), this protein is Monodehydroascorbate reductase, fruit isozyme.